Reading from the N-terminus, the 304-residue chain is MVSLISAHLLSLPSSAPRSRPQSRPPLSPPAAAAAASCSFDLPRPRRLVADGSRRKGTMAAAIPPEASGLAHDLGSAAVTAGVALALLRFFEELAKRGVFEQKLNRKLVHITIGMVFLLFWPLFSSGSYAPFLAAVAPGINIIRMLLLGLGVMKNEAMVKSMSRSGDPRELLKGPLYYATTITFATSIFWRTSPIAIALICNLCAGDGIADIVGRRLGQEKLPYNPNKSYAGSIAMALAGFMASIGYMHYFQSFGFIEESWSLAFGFLVVSVTAALVESHPISTHLDDNLTVPLTSFLVGSLVF.

The N-terminal 59 residues, 1-59, are a transit peptide targeting the chloroplast; it reads MVSLISAHLLSLPSSAPRSRPQSRPPLSPPAAAAAASCSFDLPRPRRLVADGSRRKGTM. The next 7 helical transmembrane spans lie at 68–88, 113–133, 134–154, 170–190, 194–214, 231–251, and 256–276; these read SGLAHDLGSAAVTAGVALALL, IGMVFLLFWPLFSSGSYAPFL, AAVAPGINIIRMLLLGLGVMK, ELLKGPLYYATTITFATSIFW, PIAIALICNLCAGDGIADIVG, AGSIAMALAGFMASIGYMHYF, and FIEESWSLAFGFLVVSVTAAL.

Belongs to the polyprenol kinase family.

The protein resides in the plastid. It is found in the chloroplast membrane. It carries out the reaction phytol + CTP = phytyl phosphate + CDP + H(+). It participates in cofactor biosynthesis; tocopherol biosynthesis. Functionally, involved in the activation and reutilization of phytol from chlorophyll degradation in plant metabolism, including tocopherol biosynthesis. Catalyzes the conversion of phytol to phytol monophosphate (PMP). The polypeptide is Probable phytol kinase 2, chloroplastic (Oryza sativa subsp. japonica (Rice)).